Here is a 317-residue protein sequence, read N- to C-terminus: Transaldolase (317 aa).

Catalysis depends on K126, which acts as the Schiff-base intermediate with substrate.

The protein belongs to the transaldolase family. Type 1 subfamily. Homodimer.

The protein localises to the cytoplasm. The catalysed reaction is D-sedoheptulose 7-phosphate + D-glyceraldehyde 3-phosphate = D-erythrose 4-phosphate + beta-D-fructose 6-phosphate. Its pathway is carbohydrate degradation; pentose phosphate pathway; D-glyceraldehyde 3-phosphate and beta-D-fructose 6-phosphate from D-ribose 5-phosphate and D-xylulose 5-phosphate (non-oxidative stage): step 2/3. Functionally, transaldolase is important for the balance of metabolites in the pentose-phosphate pathway. The protein is Transaldolase of Burkholderia lata (strain ATCC 17760 / DSM 23089 / LMG 22485 / NCIMB 9086 / R18194 / 383).